We begin with the raw amino-acid sequence, 136 residues long: Histone H3 (136 aa).

The interval 1–43 (MARTKQTARKSTGGKAPRKQLASKAARKSAPSTGGVKKPHRYK) is disordered. N6,N6,N6-trimethyllysine; alternate occurs at positions 5 and 10. K5 bears the N6,N6-dimethyllysine; alternate mark. K5 carries the N6-methyllysine; alternate modification. K10 is subject to N6-acetyllysine; alternate. At S11 the chain carries Phosphoserine. Position 15 is an N6,N6-dimethyllysine; alternate (K15). An N6-methyllysine; alternate mark is found at K15, K19, K24, K28, and K37. Residues K15, K19, K24, K28, and K37 each carry the N6-acetyllysine; alternate modification. N6,N6,N6-trimethyllysine; alternate occurs at positions 28 and 37. K28 and K37 each carry N6,N6-dimethyllysine; alternate. An N6-acetyllysine mark is found at K57 and K65. An N6,N6,N6-trimethyllysine; alternate modification is found at K80. K80 is modified (N6,N6-dimethyllysine; alternate). K80 bears the N6-methyllysine; alternate mark.

Belongs to the histone H3 family. As to quaternary structure, the nucleosome is a histone octamer containing two molecules each of H2A, H2B, H3 and H4 assembled in one H3-H4 heterotetramer and two H2A-H2B heterodimers. The octamer wraps approximately 147 bp of DNA. In terms of processing, phosphorylated to form H3S10ph. H3S10ph promotes subsequent H3K14ac formation and is required for transcriptional activation through TBP recruitment to the promoters. Post-translationally, mono-, di- and trimethylated by the COMPASS complex to form H3K4me1/2/3. H3K4me activates gene expression by regulating transcription elongation and plays a role in telomere length maintenance. H3K4me enrichment correlates with transcription levels, and occurs in a 5' to 3' gradient with H3K4me3 enrichment at the 5'-end of genes, shifting to H3K4me2 and then H3K4me1. Trimethylated by methyltransferase dim-5 to form H3K9me3. H3K9me3, but not H3K9me2, marks chromatin regions for cytosine methylation. Methylated by set-2 to form H3K36me. H3K36me represses gene expression. Methylated by dot-1 to form H3K79me. H3K79me is required for association of SIR proteins with telomeric regions and for telomeric silencing. The COMPASS-mediated formation of H3K4me2/3 and the dot-1-mediated formation of H3K79me require H2BK123ub1. Acetylation of histone H3 leads to transcriptional activation. H3K14ac formation by gcn-5 is promoted by H3S10ph. H3K14ac can also be formed by esa-1. H3K56ac formation occurs predominantly in newly synthesized H3 molecules during G1, S and G2/M of the cell cycle and may be involved in DNA repair.

The protein resides in the nucleus. Its subcellular location is the chromosome. In terms of biological role, core component of nucleosome. Nucleosomes wrap and compact DNA into chromatin, limiting DNA accessibility to the cellular machineries which require DNA as a template. Histones thereby play a central role in transcription regulation, DNA repair, DNA replication and chromosomal stability. DNA accessibility is regulated via a complex set of post-translational modifications of histones, also called histone code, and nucleosome remodeling. The protein is Histone H3 (hh3) of Neurospora crassa (strain ATCC 24698 / 74-OR23-1A / CBS 708.71 / DSM 1257 / FGSC 987).